The chain runs to 162 residues: Large ribosomal subunit protein uL22c (162 aa).

It belongs to the universal ribosomal protein uL22 family. Part of the 50S ribosomal subunit.

Its subcellular location is the plastid. The protein resides in the chloroplast. Functionally, this protein binds specifically to 23S rRNA. In terms of biological role, the globular domain of the protein is located near the polypeptide exit tunnel on the outside of the subunit, while an extended beta-hairpin is found that lines the wall of the exit tunnel in the center of the 70S ribosome. The chain is Large ribosomal subunit protein uL22c (rpl22) from Cucumis sativus (Cucumber).